The primary structure comprises 689 residues: Quinidine resistance protein 3 (689 aa).

A compositionally biased stretch (polar residues) spans 1–24; it reads MQAQGSQSNVGSLRSNCSDNSLPN. Positions 1-73 are disordered; sequence MQAQGSQSNV…DNQLSRLKSE (73 aa). The Extracellular segment spans residues 1 to 108; sequence MQAQGSQSNV…RDYPPMMKKM (108 aa). Basic and acidic residues-rich tracts occupy residues 29-51 and 59-73; these read MHCD…EKTN and SREH…LKSE. A helical transmembrane segment spans residues 109–131; the sequence is IVFLIAFSSMMGPMGTSIIFPAI. The Cytoplasmic segment spans residues 132–139; that stretch reads NSITTEFK. Residues 140–163 traverse the membrane as a helical segment; sequence TSVIMVNVSIGVYLLSLGVFPLWW. Over 164–175 the chain is Extracellular; sequence SSLSELEGRRTT. Residues 176–193 traverse the membrane as a helical segment; that stretch reads YITSFALLFAFNIGSALA. Topologically, residues 194-235 are cytoplasmic; that stretch reads PDINSFIALRMLCGAASASVQSVGAGTVADLYISEDRGKNLS. The helical transmembrane segment at 236–256 threads the bilayer; the sequence is YYYLGPLLAPLLSPIFGSLLV. Over 257-265 the chain is Extracellular; that stretch reads NRWPWRSTQ. The helical transmembrane segment at 266-283 threads the bilayer; the sequence is WFMVILSGCNVILLTVLL. The Cytoplasmic segment spans residues 284–475; sequence PETLRKQDSK…KSLHFLEYPP (192 aa). At Ser436 the chain carries Phosphoserine. The helical transmembrane segment at 476–493 threads the bilayer; that stretch reads VALAITFSAISFSTVYFV. Topologically, residues 494–510 are extracellular; the sequence is NMTVEYKYSRPPYNFKP. A helical transmembrane segment spans residues 511–532; sequence LYIGLLYIPNSVTYFFASIYGG. Topologically, residues 533-558 are cytoplasmic; the sequence is RWVDMLLKRYKEKYGILAPEARISWN. Residues 559 to 577 traverse the membrane as a helical segment; the sequence is VVTSVISFPIALLIFGWCL. The Extracellular portion of the chain corresponds to 578-586; it reads DKKCHWVTP. The chain crosses the membrane as a helical span at residues 587–609; the sequence is LIGTALFGYAAMMTIGATLSYLV. Residues 610–624 are Cytoplasmic-facing; it reads DSLPGKGATGVALNN. Residues 625-642 form a helical membrane-spanning segment; the sequence is LIRQILAATAVFVTTPML. At 643 to 648 the chain is on the extracellular side; the sequence is NGMGTG. A helical membrane pass occupies residues 649 to 668; sequence WAFTMLAFIVLGASSVLIIL. Residues 669–689 are Cytoplasmic-facing; the sequence is KKHGDYWRENYDLQKLYDKID.

Belongs to the major facilitator superfamily. CAR1 family.

It localises to the cell membrane. Multidrug resistance transporter involved in resistance and adaptation to quinidine and to the herbicide barban (4-chloro-2-butynyl [3-chlorophenyl] carbamate). The sequence is that of Quinidine resistance protein 3 (QDR3) from Saccharomyces cerevisiae (strain ATCC 204508 / S288c) (Baker's yeast).